The chain runs to 187 residues: NADH-dependent FMN reductase SfnF (187 aa).

It belongs to the SsuE family.

It catalyses the reaction FMNH2 + NAD(+) = FMN + NADH + 2 H(+). Functionally, involved in the dimethyl sulfide degradation pathway. Catalyzes the NADH-dependent reduction of FMN. This is NADH-dependent FMN reductase SfnF from Pseudomonas fluorescens (strain Pf0-1).